Here is a 529-residue protein sequence, read N- to C-terminus: Bifunctional purine biosynthesis protein PurH (529 aa).

Residues methionine 1 to valine 148 form the MGS-like domain. Lysine 287 is subject to N6-acetyllysine.

It belongs to the PurH family.

The enzyme catalyses (6R)-10-formyltetrahydrofolate + 5-amino-1-(5-phospho-beta-D-ribosyl)imidazole-4-carboxamide = 5-formamido-1-(5-phospho-D-ribosyl)imidazole-4-carboxamide + (6S)-5,6,7,8-tetrahydrofolate. The catalysed reaction is IMP + H2O = 5-formamido-1-(5-phospho-D-ribosyl)imidazole-4-carboxamide. It functions in the pathway purine metabolism; IMP biosynthesis via de novo pathway; 5-formamido-1-(5-phospho-D-ribosyl)imidazole-4-carboxamide from 5-amino-1-(5-phospho-D-ribosyl)imidazole-4-carboxamide (10-formyl THF route): step 1/1. Its pathway is purine metabolism; IMP biosynthesis via de novo pathway; IMP from 5-formamido-1-(5-phospho-D-ribosyl)imidazole-4-carboxamide: step 1/1. This is Bifunctional purine biosynthesis protein PurH from Escherichia coli O8 (strain IAI1).